The chain runs to 110 residues: NADH-quinone oxidoreductase subunit K (110 aa).

3 helical membrane-spanning segments follow: residues 14-34, 39-59, and 70-90; these read VSQY…GMMV, ITIL…FVGI, and IFAL…LGII.

It belongs to the complex I subunit 4L family. NDH-1 is composed of 14 different subunits. Subunits NuoA, H, J, K, L, M, N constitute the membrane sector of the complex.

Its subcellular location is the cell inner membrane. The catalysed reaction is a quinone + NADH + 5 H(+)(in) = a quinol + NAD(+) + 4 H(+)(out). Its function is as follows. NDH-1 shuttles electrons from NADH, via FMN and iron-sulfur (Fe-S) centers, to quinones in the respiratory chain. The immediate electron acceptor for the enzyme in this species is believed to be ubiquinone. Couples the redox reaction to proton translocation (for every two electrons transferred, four hydrogen ions are translocated across the cytoplasmic membrane), and thus conserves the redox energy in a proton gradient. This Hydrogenobaculum sp. (strain Y04AAS1) protein is NADH-quinone oxidoreductase subunit K.